A 176-amino-acid chain; its full sequence is Isopentenyl-diphosphate Delta-isomerase (176 aa).

Residues histidine 22 and histidine 28 each coordinate Mn(2+). The 135-residue stretch at 26 to 160 (LRHKAISVFI…PETFTPWLHI (135 aa)) folds into the Nudix hydrolase domain. The active site involves cysteine 62. Histidine 64 lines the Mn(2+) pocket. Glutamate 82 contributes to the Mg(2+) binding site. 2 residues coordinate Mn(2+): glutamate 108 and glutamate 110. Residue glutamate 110 is part of the active site.

Belongs to the IPP isomerase type 1 family. The cofactor is Mg(2+). Requires Mn(2+) as cofactor.

Its subcellular location is the cytoplasm. It catalyses the reaction isopentenyl diphosphate = dimethylallyl diphosphate. It functions in the pathway isoprenoid biosynthesis; dimethylallyl diphosphate biosynthesis; dimethylallyl diphosphate from isopentenyl diphosphate: step 1/1. The protein operates within porphyrin-containing compound metabolism; chlorophyll biosynthesis. In terms of biological role, catalyzes the 1,3-allylic rearrangement of the homoallylic substrate isopentenyl (IPP) to its highly electrophilic allylic isomer, dimethylallyl diphosphate (DMAPP). This Jannaschia sp. (strain CCS1) protein is Isopentenyl-diphosphate Delta-isomerase.